The chain runs to 366 residues: DNA polymerase IV (366 aa).

The region spanning 6-197 (IIHVDMDYFY…LKVSKLWGIG (192 aa)) is the UmuC domain. Mg(2+) is bound by residues Asp10 and Asp114. The active site involves Glu115.

It belongs to the DNA polymerase type-Y family. In terms of assembly, monomer. Requires Mg(2+) as cofactor.

The protein localises to the cytoplasm. It catalyses the reaction DNA(n) + a 2'-deoxyribonucleoside 5'-triphosphate = DNA(n+1) + diphosphate. In terms of biological role, poorly processive, error-prone DNA polymerase involved in untargeted mutagenesis. Copies undamaged DNA at stalled replication forks, which arise in vivo from mismatched or misaligned primer ends. These misaligned primers can be extended by PolIV. Exhibits no 3'-5' exonuclease (proofreading) activity. May be involved in translesional synthesis. The protein is DNA polymerase IV of Methanosarcina acetivorans (strain ATCC 35395 / DSM 2834 / JCM 12185 / C2A).